The sequence spans 948 residues: RNA polymerase-associated protein RapA (948 aa).

The region spanning 164–332 (EVADRIAPRV…FARLRLLDPN (169 aa)) is the Helicase ATP-binding domain. Residue 177–184 (DEVGLGKT) coordinates ATP. A DEAH box motif is present at residues 278-281 (DEAH). The region spanning 473–627 (RVEWLIDQLK…TCPTGNALQH (155 aa)) is the Helicase C-terminal domain.

This sequence belongs to the SNF2/RAD54 helicase family. RapA subfamily. As to quaternary structure, interacts with the RNAP. Has a higher affinity for the core RNAP than for the holoenzyme. Its ATPase activity is stimulated by binding to RNAP.

Transcription regulator that activates transcription by stimulating RNA polymerase (RNAP) recycling in case of stress conditions such as supercoiled DNA or high salt concentrations. Probably acts by releasing the RNAP, when it is trapped or immobilized on tightly supercoiled DNA. Does not activate transcription on linear DNA. Probably not involved in DNA repair. In Pseudomonas fluorescens (strain Pf0-1), this protein is RNA polymerase-associated protein RapA.